We begin with the raw amino-acid sequence, 209 residues long: Dual specificity protein phosphatase 22 (209 aa).

In terms of domain architecture, Tyrosine-protein phosphatase spans glycine 4–tyrosine 144. Cysteine 88 functions as the Phosphocysteine intermediate in the catalytic mechanism. The segment at aspartate 170 to histidine 193 is disordered. Positions alanine 177–histidine 193 are enriched in low complexity.

It belongs to the protein-tyrosine phosphatase family. Non-receptor class dual specificity subfamily.

It is found in the cytoplasm. It localises to the nucleus. It carries out the reaction O-phospho-L-tyrosyl-[protein] + H2O = L-tyrosyl-[protein] + phosphate. The enzyme catalyses O-phospho-L-seryl-[protein] + H2O = L-seryl-[protein] + phosphate. The catalysed reaction is O-phospho-L-threonyl-[protein] + H2O = L-threonyl-[protein] + phosphate. Activates the Jnk signaling pathway. Dephosphorylates and deactivates p38 and stress-activated protein kinase/c-Jun N-terminal kinase (SAPK/JNK). This Xenopus tropicalis (Western clawed frog) protein is Dual specificity protein phosphatase 22 (dusp22).